The chain runs to 602 residues: Elongation factor 4 (602 aa).

The tr-type G domain maps to 7–189; sequence RNIRNFSIIA…AIVHRIPPPK (183 aa). GTP-binding positions include 19–24 and 136–139; these read DHGKST and NKID.

The protein belongs to the TRAFAC class translation factor GTPase superfamily. Classic translation factor GTPase family. LepA subfamily.

It is found in the cell inner membrane. The enzyme catalyses GTP + H2O = GDP + phosphate + H(+). Required for accurate and efficient protein synthesis under certain stress conditions. May act as a fidelity factor of the translation reaction, by catalyzing a one-codon backward translocation of tRNAs on improperly translocated ribosomes. Back-translocation proceeds from a post-translocation (POST) complex to a pre-translocation (PRE) complex, thus giving elongation factor G a second chance to translocate the tRNAs correctly. Binds to ribosomes in a GTP-dependent manner. This Stenotrophomonas maltophilia (strain R551-3) protein is Elongation factor 4.